Here is a 227-residue protein sequence, read N- to C-terminus: PKHD-type hydroxylase Bcep18194_B0892 (227 aa).

The Fe2OG dioxygenase domain occupies 78–178 (KVFPPLFNRY…RVASFFWIQS (101 aa)). Histidine 96, aspartate 98, and histidine 159 together coordinate Fe cation. Arginine 169 serves as a coordination point for 2-oxoglutarate.

Fe(2+) is required as a cofactor. Requires L-ascorbate as cofactor.

This is PKHD-type hydroxylase Bcep18194_B0892 from Burkholderia lata (strain ATCC 17760 / DSM 23089 / LMG 22485 / NCIMB 9086 / R18194 / 383).